A 267-amino-acid chain; its full sequence is MAPRLRRNVSMLDPQHRAHAAAADPTPGAGGGVAVRVRGLRRVFGEQVVLDGLDLTITPGEFVALLGRSGSGKSTLIRILGGFDDGVEGEVLAARRRSVVFQEARLLPWKRVLPNVTLGLAGRDVAERGRVALAEVGLAGRERSWPATLSGGEAQRVALARALVREPDLLMLDEPFGALDALTRIRMHALLQHLCRRHQPAVLFVTHDVDEAILLADRVVVLTEGRFSLDVPVAVASPRRRADPAFDRLRATLLAELGVDDLAAATH.

Residues 35–249 form the ABC transporter domain; the sequence is VRVRGLRRVF…RRADPAFDRL (215 aa). Residue 67-74 participates in ATP binding; it reads GRSGSGKS.

The protein belongs to the ABC transporter superfamily. Aliphatic sulfonates importer (TC 3.A.1.17.2) family. As to quaternary structure, the complex is composed of two ATP-binding proteins (SsuB), two transmembrane proteins (SsuC) and a solute-binding protein (SsuA).

It is found in the cell membrane. It catalyses the reaction ATP + H2O + aliphatic sulfonate-[sulfonate-binding protein]Side 1 = ADP + phosphate + aliphatic sulfonateSide 2 + [sulfonate-binding protein]Side 1.. Its function is as follows. Part of the ABC transporter complex SsuABC involved in aliphatic sulfonates import. Responsible for energy coupling to the transport system. The chain is Aliphatic sulfonates import ATP-binding protein SsuB 1 from Frankia alni (strain DSM 45986 / CECT 9034 / ACN14a).